A 29-amino-acid chain; its full sequence is Cytochrome b6-f complex subunit 8 (29 aa).

Residues 3 to 23 traverse the membrane as a helical segment; the sequence is IITFGWVAVAAFFALSIAFVV.

Belongs to the PetN family. The 4 large subunits of the cytochrome b6-f complex are cytochrome b6, subunit IV (17 kDa polypeptide, PetD), cytochrome f and the Rieske protein, while the 4 small subunits are PetG, PetL, PetM and PetN. The complex functions as a dimer.

It localises to the cellular thylakoid membrane. Functionally, component of the cytochrome b6-f complex, which mediates electron transfer between photosystem II (PSII) and photosystem I (PSI), cyclic electron flow around PSI, and state transitions. This is Cytochrome b6-f complex subunit 8 from Synechococcus sp. (strain JA-3-3Ab) (Cyanobacteria bacterium Yellowstone A-Prime).